A 104-amino-acid polypeptide reads, in one-letter code: L-rhamnose mutarotase (104 aa).

Position 18 (Y18) interacts with substrate. H22 serves as the catalytic Proton donor. Substrate is bound by residues Y41 and 76 to 77; that span reads WW.

Belongs to the rhamnose mutarotase family. Homodimer.

The protein resides in the cytoplasm. It carries out the reaction alpha-L-rhamnose = beta-L-rhamnose. Its pathway is carbohydrate metabolism; L-rhamnose metabolism. Functionally, involved in the anomeric conversion of L-rhamnose. This is L-rhamnose mutarotase from Bacillus subtilis (strain 168).